Here is a 580-residue protein sequence, read N- to C-terminus: PX domain-containing protein kinase-like protein (580 aa).

One can recognise a PX domain in the interval 14 to 126 (LDDTVPLTAA…KFLDPNNYSA (113 aa)). The 394-residue stretch at 88–481 (FIAERQKGLQ…VENSEEQPVK (394 aa)) folds into the Protein kinase domain. Positions 433-551 (EQKQIHQHRR…LPQAVNGVNR (119 aa)) are disordered. Basic residues-rich tracts occupy residues 437–448 (IHQHRRLTRAQS) and 457–469 (KRRK…KSKR). Low complexity predominate over residues 483 to 514 (SNANNSAGSGASSPLTSPSSPTPPSTAGLSSA). The span at 515–531 (LPPPPPPPPPPPPPAGP) shows a compositional bias: pro residues. The region spanning 549 to 568 (VNRGALLSSIQNFQKGTLRK) is the WH2 domain.

This sequence belongs to the protein kinase superfamily.

Its subcellular location is the cytoplasm. The protein resides in the cell membrane. Functionally, binds to and modulates brain Na,K-ATPase subunits ATP1B1 and ATP1B3 and may thereby participate in the regulation of electrical excitability and synaptic transmission. May not display kinase activity. The chain is PX domain-containing protein kinase-like protein from Rattus norvegicus (Rat).